Here is a 156-residue protein sequence, read N- to C-terminus: Large ribosomal subunit protein uL30 (156 aa).

It belongs to the universal ribosomal protein uL30 family. Part of the 50S ribosomal subunit.

In Thermofilum pendens (strain DSM 2475 / Hrk 5), this protein is Large ribosomal subunit protein uL30.